The following is a 72-amino-acid chain: Keratin-associated protein 19-5 (72 aa).

This sequence belongs to the KRTAP type 19 family. In terms of assembly, interacts with hair keratins.

In terms of biological role, in the hair cortex, hair keratin intermediate filaments are embedded in an interfilamentous matrix, consisting of hair keratin-associated proteins (KRTAP), which are essential for the formation of a rigid and resistant hair shaft through their extensive disulfide bond cross-linking with abundant cysteine residues of hair keratins. The matrix proteins include the high-sulfur and high-glycine-tyrosine keratins. In Homo sapiens (Human), this protein is Keratin-associated protein 19-5 (KRTAP19-5).